Reading from the N-terminus, the 453-residue chain is Adenosylmethionine-8-amino-7-oxononanoate aminotransferase (453 aa).

118-119 (GS) provides a ligand contact to pyridoxal 5'-phosphate. Tyrosine 151 serves as a coordination point for substrate. Pyridoxal 5'-phosphate is bound at residue aspartate 258. Residues lysine 287, glycine 322, and arginine 417 each contribute to the substrate site. Lysine 287 is subject to N6-(pyridoxal phosphate)lysine.

Belongs to the class-III pyridoxal-phosphate-dependent aminotransferase family. BioA subfamily. As to quaternary structure, homodimer. Requires pyridoxal 5'-phosphate as cofactor.

It is found in the cytoplasm. The catalysed reaction is (8S)-8-amino-7-oxononanoate + S-adenosyl-L-methionine = S-adenosyl-4-methylsulfanyl-2-oxobutanoate + (7R,8S)-7,8-diammoniononanoate. The protein operates within cofactor biosynthesis; biotin biosynthesis; 7,8-diaminononanoate from 8-amino-7-oxononanoate (SAM route): step 1/1. Functionally, catalyzes the transfer of the alpha-amino group from S-adenosyl-L-methionine (SAM) to 7-keto-8-aminopelargonic acid (KAPA) to form 7,8-diaminopelargonic acid (DAPA). It is the only aminotransferase known to utilize SAM as an amino donor. The protein is Adenosylmethionine-8-amino-7-oxononanoate aminotransferase of Geobacter sulfurreducens (strain ATCC 51573 / DSM 12127 / PCA).